Here is a 528-residue protein sequence, read N- to C-terminus: Protein spinster homolog 1 (528 aa).

The interval 1 to 44 (MSGSDTAPFLSQADDTDDGPAPGTPGLPGSMGNPKSEDPAVPDQ) is disordered. The next 12 helical transmembrane spans lie at 50–70 (ITGLSSGHSALIVAVLCYINL), 98–118 (GLIQTVFISSYMVLAPVFGYL), 126–146 (YLMCGGIAFWSLVTLGSSFIP), 160–180 (VGVGEASYSTIAPTLIADLFV), 187–207 (MLSVFYFAIPVGSGLGYIAGS), 218–238 (WALRVTPGLGVLAVVLLFLVV), 278–298 (LGFTAVAFVTGSLALWAPAFL), 323–343 (LIFGLITCLTGVLGVGLGVEI), 357–377 (LVCAAGLLGSAPFLFLALACA), 381–401 (IVATYIFIFIGETLLSMNWAI), 421–441 (FQIVLSHLLGDAGSPYLIGSI), and 465–485 (MLCAFVGALGGAAFLGTAIFI). Serine 518 is subject to Phosphoserine.

It belongs to the major facilitator superfamily. Spinster (TC 2.A.1.49) family. In terms of assembly, interacts with BCL2 and BCL2L1.

It is found in the lysosome membrane. The catalysed reaction is a 1-acyl-sn-glycero-3-phosphocholine(out) + H(+)(out) = a 1-acyl-sn-glycero-3-phosphocholine(in) + H(+)(in). The enzyme catalyses 1-hexadecanoyl-sn-glycero-3-phosphocholine(out) + H(+)(out) = 1-hexadecanoyl-sn-glycero-3-phosphocholine(in) + H(+)(in). It carries out the reaction 1-(9Z-octadecenoyl)-sn-glycero-3-phosphocholine(out) + H(+)(out) = 1-(9Z-octadecenoyl)-sn-glycero-3-phosphocholine(in) + H(+)(in). It catalyses the reaction 1-(5Z,8Z,11Z,14Z-eicosatetraenoyl)-sn-glycero-3-phosphocholine(out) + H(+)(out) = 1-(5Z,8Z,11Z,14Z-eicosatetraenoyl)-sn-glycero-3-phosphocholine(in) + H(+)(in). The catalysed reaction is 1-(4Z,7Z,10Z,13Z,16Z,19Z-docosahexaenoyl)-sn-glycero-3-phosphocholine(out) + H(+)(out) = 1-(4Z,7Z,10Z,13Z,16Z,19Z-docosahexaenoyl)-sn-glycero-3-phosphocholine(in) + H(+)(in). The enzyme catalyses a 1-acyl-sn-glycero-3-phosphoethanolamine(out) + H(+)(out) = a 1-acyl-sn-glycero-3-phosphoethanolamine(in) + H(+)(in). It carries out the reaction 1-(9Z-octadecenoyl)-sn-glycero-3-phosphoethanolamine(out) + H(+)(out) = 1-(9Z-octadecenoyl)-sn-glycero-3-phosphoethanolamine(in) + H(+)(in). It catalyses the reaction 1-acyl-sn-glycero-3-phospho-(1'-sn-glycerol)(out) + H(+)(out) = 1-acyl-sn-glycero-3-phospho-(1'-sn-glycerol)(in) + H(+)(in). The catalysed reaction is 1-(9Z-octadecenoyl)-sn-glycero-3-phospho-(1'-sn-glycerol)(out) + H(+)(out) = 1-(9Z-octadecenoyl)-sn-glycero-3-phospho-(1'-sn-glycerol)(in) + H(+)(in). The enzyme catalyses a 1-O-(1Z-alkenyl)-sn-glycero-3-phosphocholine(out) + H(+)(out) = a 1-O-(1Z-alkenyl)-sn-glycero-3-phosphocholine(in) + H(+)(in). It carries out the reaction 1-(1Z-hexadecenyl)-sn-glycero-3-phosphocholine(out) + H(+)(out) = 1-(1Z-hexadecenyl)-sn-glycero-3-phosphocholine(in) + H(+)(in). It catalyses the reaction a 1-O-(1Z-alkenyl)-sn-glycero-3-phosphoethanolamine(out) + H(+)(out) = a 1-O-(1Z-alkenyl)-sn-glycero-3-phosphoethanolamine(in) + H(+)(in). The catalysed reaction is 1-O-(1Z-hexadecenyl)-sn-glycero-3-phosphoethanolamine(out) + H(+)(out) = 1-O-(1Z-hexadecenyl)-sn-glycero-3-phosphoethanolamine(in) + H(+)(in). In terms of biological role, plays a critical role in the phospholipid salvage pathway from lysosomes to the cytosol. Mediates the rate-limiting, proton-dependent, lysosomal efflux of lysophospholipids, which can then be reacylated by acyltransferases in the endoplasmic reticulum to form phospholipids. Selective for zwitterionic headgroups such as lysophosphatidylcholine (LPC) and lysophosphatidylethanolamine (LPE), can also transport lysophosphatidylglycerol (LPG), but not other anionic lysophospholipids, sphingosine, nor sphingomyelin. Transports lysophospholipids with saturated, monounsaturated, and polyunsaturated fatty acids, such as 1-hexadecanoyl-sn-glycero-3-phosphocholine, 1-(9Z-octadecenoyl)-sn-glycero-3-phosphocholine and 1-(4Z,7Z,10Z,13Z,16Z,19Z-docosahexaenoyl)-sn-glycero-3-phosphocholine, respectively. Can also transport lysoplasmalogen (LPC with a fatty alcohol) such as 1-(1Z-hexadecenyl)-sn-glycero-3-phosphocholine. Essential player in lysosomal homeostasis. Crucial for cell survival under conditions of nutrient limitation. May be involved in necrotic or autophagic cell death. The sequence is that of Protein spinster homolog 1 (SPNS1) from Bos taurus (Bovine).